The sequence spans 267 residues: Phosphate import ATP-binding protein PstB 2 (267 aa).

One can recognise an ABC transporter domain in the interval 21-262 (LSTKDVHVYY…AKLQSTNDYV (242 aa)). 53–60 (GPSGSGKS) is a binding site for ATP.

This sequence belongs to the ABC transporter superfamily. Phosphate importer (TC 3.A.1.7) family. The complex is composed of two ATP-binding proteins (PstB), two transmembrane proteins (PstC and PstA) and a solute-binding protein (PstS).

It is found in the cell membrane. The catalysed reaction is phosphate(out) + ATP + H2O = ADP + 2 phosphate(in) + H(+). Its function is as follows. Part of the ABC transporter complex PstSACB involved in phosphate import. Responsible for energy coupling to the transport system. The chain is Phosphate import ATP-binding protein PstB 2 from Streptococcus pneumoniae serotype 4 (strain ATCC BAA-334 / TIGR4).